Here is a 497-residue protein sequence, read N- to C-terminus: Guanosine-5'-triphosphate,3'-diphosphate pyrophosphatase (497 aa).

The protein belongs to the GppA/Ppx family. GppA subfamily.

It carries out the reaction guanosine 3'-diphosphate 5'-triphosphate + H2O = guanosine 3',5'-bis(diphosphate) + phosphate + H(+). Its pathway is purine metabolism; ppGpp biosynthesis; ppGpp from GTP: step 2/2. Functionally, catalyzes the conversion of pppGpp to ppGpp. Guanosine pentaphosphate (pppGpp) is a cytoplasmic signaling molecule which together with ppGpp controls the 'stringent response', an adaptive process that allows bacteria to respond to amino acid starvation, resulting in the coordinated regulation of numerous cellular activities. In Vibrio parahaemolyticus serotype O3:K6 (strain RIMD 2210633), this protein is Guanosine-5'-triphosphate,3'-diphosphate pyrophosphatase.